Reading from the N-terminus, the 371-residue chain is uncharacterized protein (371 aa).

Solcar repeat units lie at residues 3 to 98 (DDSL…CKVL), 131 to 276 (RYWG…FKSF), and 284 to 369 (KSNF…VRKW). The next 6 membrane-spanning stretches (helical) occupy residues 9–29 (AIAG…LDVV), 73–93 (GVGP…VVYE), 137–157 (IFSA…IWVV), 253–273 (LFPS…YEYF), 290–310 (VLAA…HEVL), and 341–362 (YYSG…TFLS).

Belongs to the mitochondrial carrier (TC 2.A.29) family.

It is found in the mitochondrion inner membrane. This is an uncharacterized protein from Schizosaccharomyces pombe (strain 972 / ATCC 24843) (Fission yeast).